The following is a 479-amino-acid chain: MAQHTVYFPDAFLTQMREAMPSTLSFDDFLAACQRPLRRSIRVNTLKTSVADFLQLTAPYGWTLTPIPWCEEGFWIERDSEDALPLGSTAEHLSGLFYIQEASSMLPVAALFADGNAPQRVMDVAAAPGSKTTQIAARMNNEGAILANEFSASRVKVLHANISRCGISNVALTHFDGRVFGAAVPEMFDAILLDAPCSGEGVVRKDPDALKNWSPESNQEIAATQRELIDSAFHALRPGGTLVYSTCTLNREENEAVCLWLKETYPDAVEFLPLGDLFPGANKALTEEGFLHVFPQIYDCEGFFVARLRKTQAIPVLPAPKYKVGNFPFSPVKDREAGQIRQAAASVGLNWDENLRLWQRDKELWLFPVGIEALIGKVRFSRLGIKLAETHNKGYRWQHEAVIALASPDNVNAFELTPQEAEEWYRGRDVYPQAAPVADDVLVTFQHQPIGLAKRIGSRLKNSYPRELVRDGKLFTGNA.

S-adenosyl-L-methionine is bound by residues 125-131, E149, D176, and D194; that span reads AAAPGSK. C247 serves as the catalytic Nucleophile.

The protein belongs to the class I-like SAM-binding methyltransferase superfamily. RsmB/NOP family.

It localises to the cytoplasm. It catalyses the reaction cytidine(1407) in 16S rRNA + S-adenosyl-L-methionine = 5-methylcytidine(1407) in 16S rRNA + S-adenosyl-L-homocysteine + H(+). Its function is as follows. Specifically methylates the cytosine at position 1407 (m5C1407) of 16S rRNA. This Escherichia coli O127:H6 (strain E2348/69 / EPEC) protein is Ribosomal RNA small subunit methyltransferase F.